A 256-amino-acid polypeptide reads, in one-letter code: Glycerol-3-phosphate acyltransferase (256 aa).

6 helical membrane-spanning segments follow: residues 2 to 22 (FPYL…SVLW), 58 to 78 (LAVA…AIGL), 90 to 110 (SYFI…WFKF), 123 to 143 (LIVV…IFAF), 153 to 173 (IIGT…GVMG), and 211 to 231 (FADG…ILVV).

This sequence belongs to the PlsY family. In terms of assembly, probably interacts with PlsX.

Its subcellular location is the cell membrane. It catalyses the reaction an acyl phosphate + sn-glycerol 3-phosphate = a 1-acyl-sn-glycero-3-phosphate + phosphate. It participates in lipid metabolism; phospholipid metabolism. Functionally, catalyzes the transfer of an acyl group from acyl-phosphate (acyl-PO(4)) to glycerol-3-phosphate (G3P) to form lysophosphatidic acid (LPA). This enzyme utilizes acyl-phosphate as fatty acyl donor, but not acyl-CoA or acyl-ACP. The protein is Glycerol-3-phosphate acyltransferase of Mesoplasma florum (strain ATCC 33453 / NBRC 100688 / NCTC 11704 / L1) (Acholeplasma florum).